Here is a 210-residue protein sequence, read N- to C-terminus: ATP-dependent Clp protease proteolytic subunit (210 aa).

Residue Ser-106 is the Nucleophile of the active site. His-131 is a catalytic residue.

This sequence belongs to the peptidase S14 family. In terms of assembly, fourteen ClpP subunits assemble into 2 heptameric rings which stack back to back to give a disk-like structure with a central cavity, resembling the structure of eukaryotic proteasomes.

It is found in the cytoplasm. The enzyme catalyses Hydrolysis of proteins to small peptides in the presence of ATP and magnesium. alpha-casein is the usual test substrate. In the absence of ATP, only oligopeptides shorter than five residues are hydrolyzed (such as succinyl-Leu-Tyr-|-NHMec, and Leu-Tyr-Leu-|-Tyr-Trp, in which cleavage of the -Tyr-|-Leu- and -Tyr-|-Trp bonds also occurs).. Functionally, cleaves peptides in various proteins in a process that requires ATP hydrolysis. Has a chymotrypsin-like activity. Plays a major role in the degradation of misfolded proteins. The sequence is that of ATP-dependent Clp protease proteolytic subunit from Bartonella tribocorum (strain CIP 105476 / IBS 506).